Here is a 549-residue protein sequence, read N- to C-terminus: Glucose-6-phosphate isomerase (549 aa).

E353 (proton donor) is an active-site residue. Residues H384 and K510 contribute to the active site.

This sequence belongs to the GPI family.

It localises to the cytoplasm. It carries out the reaction alpha-D-glucose 6-phosphate = beta-D-fructose 6-phosphate. The protein operates within carbohydrate biosynthesis; gluconeogenesis. It functions in the pathway carbohydrate degradation; glycolysis; D-glyceraldehyde 3-phosphate and glycerone phosphate from D-glucose: step 2/4. Catalyzes the reversible isomerization of glucose-6-phosphate to fructose-6-phosphate. The polypeptide is Glucose-6-phosphate isomerase (Mycolicibacterium smegmatis (Mycobacterium smegmatis)).